Here is a 160-residue protein sequence, read N- to C-terminus: Large ribosomal subunit protein bL19 (160 aa).

The protein belongs to the bacterial ribosomal protein bL19 family.

Functionally, this protein is located at the 30S-50S ribosomal subunit interface and may play a role in the structure and function of the aminoacyl-tRNA binding site. The protein is Large ribosomal subunit protein bL19 of Prochlorococcus marinus subsp. pastoris (strain CCMP1986 / NIES-2087 / MED4).